The following is a 382-amino-acid chain: Beta-lactamase CMY-10 (382 aa).

A signal peptide spans 1 to 23; it reads MQQRQSILWGAVATLMWAGLAHA. Residue serine 88 is the Acyl-ester intermediate of the active site. An AMP-binding site is contributed by serine 88. Residues serine 88, glutamine 144, tyrosine 174, threonine 336, serine 338, and asparagine 363 each contribute to the GMP site. 6 residues coordinate IMP: serine 88, glutamine 144, tyrosine 174, threonine 336, serine 338, and asparagine 363. Residue tyrosine 174 coordinates AMP. Serine 338 provides a ligand contact to AMP.

This sequence belongs to the class-C beta-lactamase family. In terms of assembly, monomer.

It carries out the reaction a beta-lactam + H2O = a substituted beta-amino acid. Inhibited by various nucleotides in vitro, including adenosine 5'-(P-acetyl)monophosphate (acAMP), inosine-5'-monophosphate (IMP) and guanosine-5'-monophosphate (GMP); IMP and GMP exhibit strongest competitive inhibition. Inhibited by the beta-lactamase-blocking agent, avibactam. Inhibited by clavulanic acid. Weakly inhibited by citric acid. Class C beta-lactamase which confers resistance to penicillins and cephalosporins. Has benzylpenicillin-, ceftazidime-, nitrocefin- and imipenem-hydrolyzing activity. This is Beta-lactamase CMY-10 from Klebsiella aerogenes (Enterobacter aerogenes).